The sequence spans 518 residues: Protein nucleotidyltransferase YdiU (518 aa).

Residues glycine 109, glycine 111, arginine 112, lysine 131, aspartate 143, glycine 144, arginine 194, and arginine 201 each contribute to the ATP site. The active-site Proton acceptor is aspartate 270. Mg(2+) is bound by residues asparagine 271 and aspartate 280. Aspartate 280 is a binding site for ATP.

Belongs to the SELO family. It depends on Mg(2+) as a cofactor. The cofactor is Mn(2+).

It catalyses the reaction L-seryl-[protein] + ATP = 3-O-(5'-adenylyl)-L-seryl-[protein] + diphosphate. The enzyme catalyses L-threonyl-[protein] + ATP = 3-O-(5'-adenylyl)-L-threonyl-[protein] + diphosphate. The catalysed reaction is L-tyrosyl-[protein] + ATP = O-(5'-adenylyl)-L-tyrosyl-[protein] + diphosphate. It carries out the reaction L-histidyl-[protein] + UTP = N(tele)-(5'-uridylyl)-L-histidyl-[protein] + diphosphate. It catalyses the reaction L-seryl-[protein] + UTP = O-(5'-uridylyl)-L-seryl-[protein] + diphosphate. The enzyme catalyses L-tyrosyl-[protein] + UTP = O-(5'-uridylyl)-L-tyrosyl-[protein] + diphosphate. Nucleotidyltransferase involved in the post-translational modification of proteins. It can catalyze the addition of adenosine monophosphate (AMP) or uridine monophosphate (UMP) to a protein, resulting in modifications known as AMPylation and UMPylation. This is Protein nucleotidyltransferase YdiU from Paraburkholderia xenovorans (strain LB400).